A 154-amino-acid polypeptide reads, in one-letter code: 6,7-dimethyl-8-ribityllumazine synthase (154 aa).

5-amino-6-(D-ribitylamino)uracil-binding positions include Phe-22, 56-58 (AFE), and 80-82 (AVI). A (2S)-2-hydroxy-3-oxobutyl phosphate-binding site is contributed by 85–86 (ET). Catalysis depends on His-88, which acts as the Proton donor. Residue Phe-113 participates in 5-amino-6-(D-ribitylamino)uracil binding. Arg-127 provides a ligand contact to (2S)-2-hydroxy-3-oxobutyl phosphate.

It belongs to the DMRL synthase family.

The enzyme catalyses (2S)-2-hydroxy-3-oxobutyl phosphate + 5-amino-6-(D-ribitylamino)uracil = 6,7-dimethyl-8-(1-D-ribityl)lumazine + phosphate + 2 H2O + H(+). It participates in cofactor biosynthesis; riboflavin biosynthesis; riboflavin from 2-hydroxy-3-oxobutyl phosphate and 5-amino-6-(D-ribitylamino)uracil: step 1/2. In terms of biological role, catalyzes the formation of 6,7-dimethyl-8-ribityllumazine by condensation of 5-amino-6-(D-ribitylamino)uracil with 3,4-dihydroxy-2-butanone 4-phosphate. This is the penultimate step in the biosynthesis of riboflavin. This is 6,7-dimethyl-8-ribityllumazine synthase from Thermoanaerobacter pseudethanolicus (strain ATCC 33223 / 39E) (Clostridium thermohydrosulfuricum).